The sequence spans 105 residues: Large ribosomal subunit protein uL24 (105 aa).

The protein belongs to the universal ribosomal protein uL24 family. In terms of assembly, part of the 50S ribosomal subunit.

Its function is as follows. One of two assembly initiator proteins, it binds directly to the 5'-end of the 23S rRNA, where it nucleates assembly of the 50S subunit. In terms of biological role, one of the proteins that surrounds the polypeptide exit tunnel on the outside of the subunit. This Psychrobacter sp. (strain PRwf-1) protein is Large ribosomal subunit protein uL24.